The primary structure comprises 472 residues: L-aspartate oxidase (472 aa).

FAD-binding positions include 7–10 (SGLA), 36–43 (SSYWAKGG), and Asp-190. Residue Arg-256 is the Proton donor/acceptor of the active site. Residues Glu-332 and 348-349 (SL) each bind FAD.

The protein belongs to the FAD-dependent oxidoreductase 2 family. NadB subfamily. FAD serves as cofactor.

It localises to the cytoplasm. The catalysed reaction is L-aspartate + O2 = iminosuccinate + H2O2. The protein operates within cofactor biosynthesis; NAD(+) biosynthesis; iminoaspartate from L-aspartate (oxidase route): step 1/1. Functionally, catalyzes the oxidation of L-aspartate to iminoaspartate, the first step in the de novo biosynthesis of NAD(+). The polypeptide is L-aspartate oxidase (nadB) (Saccharolobus solfataricus (strain ATCC 35092 / DSM 1617 / JCM 11322 / P2) (Sulfolobus solfataricus)).